The chain runs to 458 residues: ATP synthase subunit beta (458 aa).

An ATP-binding site is contributed by 148–155 (GGAGVGKT).

It belongs to the ATPase alpha/beta chains family. In terms of assembly, F-type ATPases have 2 components, CF(1) - the catalytic core - and CF(0) - the membrane proton channel. CF(1) has five subunits: alpha(3), beta(3), gamma(1), delta(1), epsilon(1). CF(0) has three main subunits: a(1), b(2) and c(9-12). The alpha and beta chains form an alternating ring which encloses part of the gamma chain. CF(1) is attached to CF(0) by a central stalk formed by the gamma and epsilon chains, while a peripheral stalk is formed by the delta and b chains.

The protein resides in the cell inner membrane. The enzyme catalyses ATP + H2O + 4 H(+)(in) = ADP + phosphate + 5 H(+)(out). Produces ATP from ADP in the presence of a proton gradient across the membrane. The catalytic sites are hosted primarily by the beta subunits. This chain is ATP synthase subunit beta, found in Francisella tularensis subsp. tularensis (strain FSC 198).